Reading from the N-terminus, the 1250-residue chain is Immunoglobulin superfamily DCC subclass member 4 (1250 aa).

The N-terminal stretch at 1–24 is a signal peptide; it reads MARGDAGRGRGLLALTFCLLAARG. The Extracellular segment spans residues 25–957; it reads ELLLPQETTV…SDSLDMHSVT (933 aa). 4 Ig-like C2-type domains span residues 29–137, 143–229, 242–330, and 335–421; these read PQET…TAVV, ADFS…ALLS, QDVV…AELR, and PAIT…ASLA. The cysteines at positions 57 and 121 are disulfide-linked. N-linked (GlcNAc...) asparagine glycosylation is found at N90, N102, and N157. Cysteines 164 and 212 form a disulfide. The N-linked (GlcNAc...) asparagine glycan is linked to N252. 2 disulfides stabilise this stretch: C265-C312 and C356-C405. 5 consecutive Fibronectin type-III domains span residues 431-525, 527-623, 632-741, 752-845, and 850-945; these read APTR…TLDD, PSAA…TPSM, APAE…APAP, PPAH…TLPD, and PPSD…TLQE. N582 carries N-linked (GlcNAc...) asparagine glycosylation. A helical transmembrane segment spans residues 958–978; sequence GIIVGVCLGLLCLLACMCAGL. The Cytoplasmic segment spans residues 979–1250; the sequence is RRSPHRESLP…LPRSPVSSSA (272 aa). Position 995 is a phosphothreonine (T995). Disordered stretches follow at residues 1140–1175 and 1215–1250; these read SASN…DPGQ and PGEV…SSSA.

It belongs to the immunoglobulin superfamily. DCC family.

The protein resides in the cell membrane. This chain is Immunoglobulin superfamily DCC subclass member 4 (IGDCC4), found in Homo sapiens (Human).